Reading from the N-terminus, the 231-residue chain is Dephospho-CoA kinase domain-containing protein (231 aa).

The 205-residue stretch at 3–207 (LVGLTGGIAS…HSLEYLPLRL (205 aa)) folds into the DPCK domain. ATP is bound at residue 8 to 15 (GGIASGKS).

Belongs to the CoaE family.

This is Dephospho-CoA kinase domain-containing protein (DCAKD) from Bos taurus (Bovine).